The chain runs to 393 residues: Cytochrome b (393 aa).

4 helical membrane passes run 33 to 53 (FGSL…FLAM), 77 to 98 (WFLR…YLHM), 113 to 133 (WNIG…GYVL), and 178 to 198 (FFAI…LHLL). 2 residues coordinate heme b: H83 and H97. Residues H182 and H196 each contribute to the heme b site. H201 serves as a coordination point for a ubiquinone. A run of 4 helical transmembrane segments spans residues 226-246 (YKDV…ALFA), 288-308 (LGGV…PFIH), 320-340 (LSQL…WIGG), and 347-367 (FIII…ILMP).

It belongs to the cytochrome b family. In terms of assembly, the cytochrome bc1 complex contains 3 respiratory subunits (MT-CYB, CYC1 and UQCRFS1), 2 core proteins (UQCRC1 and UQCRC2) and probably 6 low-molecular weight proteins. Requires heme b as cofactor.

Its subcellular location is the mitochondrion inner membrane. Functionally, component of the ubiquinol-cytochrome c reductase complex (complex III or cytochrome b-c1 complex) that is part of the mitochondrial respiratory chain. The b-c1 complex mediates electron transfer from ubiquinol to cytochrome c. Contributes to the generation of a proton gradient across the mitochondrial membrane that is then used for ATP synthesis. In Synbranchus marmoratus (Marbled swamp eel), this protein is Cytochrome b (mt-cyb).